We begin with the raw amino-acid sequence, 144 residues long: MHPTLKSNAGEWSQPIVNLFYSNFSGNCKALLQYIDNAGITDHIPIKFINVDNPTMRSVVSAKISHVPALVVLQDDQMSLYVAESVWEWFDNYRTPPPLADGATVDSQASENGEKEAQPTPPKEGLLTVLELAKQMRKEREQQT.

The interval P98–L127 is disordered.

This is an uncharacterized protein from Aedes vexans (Inland floodwater mosquito).